The following is a 489-amino-acid chain: Pre-glycoprotein polyprotein GP complex (489 aa).

Residue Gly2 is the site of N-myristoyl glycine; by host attachment. Over 2-17 the chain is Extracellular; that stretch reads GQIVTFFQEVPHILEE. The chain crosses the membrane as a helical span at residues 18–33; sequence VMNIVLMTLSILAILK. At 34-58 the chain is on the cytoplasmic side; it reads GIYNVMTCGIIGLITFLFLCGRSCS. Cys57 provides a ligand contact to Zn(2+). The Extracellular segment spans residues 59–430; sequence SIYKDNYEFF…QSTTPLGLVD (372 aa). N-linked (GlcNAc...) asparagine; by host glycosylation is found at Asn78, Asn88, Asn98, Asn108, Asn118, and Asn166. Cystine bridges form between Cys85-Cys229, Cys117-Cys154, Cys179-Cys210, Cys277-Cys290, Cys299-Cys308, and Cys362-Cys383. An N-linked (GlcNAc...) asparagine; by host glycan is attached at Asn222. N-linked (GlcNAc...) asparagine; by host glycans are attached at residues Asn363, Asn371, Asn388, and Asn393. Residues 431–451 form a helical membrane-spanning segment; the sequence is LFVFSTSFYLISVFLHLIKIP. At 452 to 489 the chain is on the cytoplasmic side; the sequence is THRHIKGKPCPKPHRLNHMAICSCGFYKQPGLPTQWKR. Zn(2+) is bound by residues His453, His455, Cys461, His465, Cys473, and Cys475.

Belongs to the arenaviridae GPC protein family. As to quaternary structure, interacts with glycoprotein G2. Part of the GP complex (GP-C) together with glycoprotein G1 and glycoprotein G2. The GP-complex interacts with protein Z, which interacts with ribonucleocapsid; these interactions may induce virion budding. In terms of assembly, homotrimer; disulfide-linked. In pre-fusion state, G1 homotrimers bind G2 homotrimers via ionic interactions. Part of the GP complex (GP-C) together with glycoprotein G2 and the stable signal peptide. The GP-complex interacts with protein Z, which interacts with ribonucleocapsid; these interactions may induce virion budding. Homotrimer. Interacts with the stable signal peptide. In pre-fusion state, G2 homotrimers bind G1 homotrimers via ionic interactions. Part of the GP complex (GP-C) together with glycoprotein G1 and the stable signal peptide. Acidification in the endosome triggers rearrangements, which ultimately leads to a 6 helix bundle formed by the two heptad repeat domains (HR1 and HR2) in post-fusion state. The GP-complex interacts with protein Z, which interacts with ribonucleocapsid; these interactions may induce virion budding. Post-translationally, specific enzymatic cleavages in vivo yield mature proteins. GP-C polyprotein is cleaved in the endoplasmic reticulum by the host protease MBTPS1. Only cleaved glycoprotein is incorporated into virions. In terms of processing, the SSP remains stably associated with the GP complex following cleavage by signal peptidase and plays crucial roles in the trafficking of GP through the secretory pathway. Myristoylation is necessary for GP2-mediated fusion activity.

It localises to the virion membrane. The protein localises to the host endoplasmic reticulum membrane. It is found in the host Golgi apparatus membrane. The protein resides in the host cell membrane. Functionally, functions as a cleaved signal peptide that is retained as the third component of the GP complex (GP-C). Helps to stabilize the spike complex in its native conformation. The SSP is required for efficient glycoprotein expression, post-translational maturation cleavage of G1 and G2, glycoprotein transport to the cell surface plasma membrane, formation of infectious virus particles, and acid pH-dependent glycoprotein-mediated cell fusion. Forms the virion spikes together with glycoprotein G2. The glycoprotein spike trimers are connected to the underlying matrix. Interacts with the host receptor leading to virus endocytosis. Its function is as follows. Forms the virion spikes together with glycoprotein G1. The glycoprotein spike trimers are connected to the underlying matrix. Class I viral fusion protein that directs fusion of viral and host endosomal membranes, leading to delivery of the nucleocapsid into the cytoplasm. Membrane fusion is mediated by irreversible conformational changes induced by acidification. In Mastomys natalensis (African soft-furred rat), this protein is Pre-glycoprotein polyprotein GP complex.